The primary structure comprises 1025 residues: Multidrug resistance protein MdtC (1025 aa).

A run of 12 helical transmembrane segments spans residues 3–23 (FFAL…AITL), 333–353 (EVEQ…FLFL), 360–380 (IIPA…MYLC), 387–407 (LSLM…IVVL), 431–451 (VGFT…PLLL), 463–483 (FAVT…TLTP), 528–548 (LVGV…ISIP), 853–873 (VILI…LYES), 875–895 (VHPL…LLAL), 897–917 (LFNA…IGIV), 953–973 (PIMM…LSGG), and 984–1004 (ITIV…TPVV).

Belongs to the resistance-nodulation-cell division (RND) (TC 2.A.6) family. MdtC subfamily. In terms of assembly, part of a tripartite efflux system composed of MdtA, MdtB and MdtC. MdtC forms a heteromultimer with MdtB.

The protein localises to the cell inner membrane. The polypeptide is Multidrug resistance protein MdtC (Shigella boydii serotype 4 (strain Sb227)).